The sequence spans 840 residues: Leucine--tRNA ligase (840 aa).

A 'HIGH' region motif is present at residues 44–55; it reads PYPSANGLHVGH. The 'KMSKS' region signature appears at 617 to 621; sequence KMSKS. Lys-620 is an ATP binding site.

It belongs to the class-I aminoacyl-tRNA synthetase family.

The protein localises to the cytoplasm. It catalyses the reaction tRNA(Leu) + L-leucine + ATP = L-leucyl-tRNA(Leu) + AMP + diphosphate. The chain is Leucine--tRNA ligase from Borreliella afzelii (strain PKo) (Borrelia afzelii).